The sequence spans 222 residues: MGRIKNKQFAVIGLGRFGGSICKELHRMGHEVLAVDINEEKVNAYASYATHAVIANATEENELLSLGIRNFEYVIVAIGANIQASTLTTLLLKELDIPNIWVKAQNYYHHKVLEKIGADRIIHPEKDMGVKIAQSLSDENVLNYIDLSDEYSIVELLATRKLDSKSIIDLNVRAKYGCTILAIKHHGDICLSPAPEDIIREQDCLVIMGHKKDIKRFENEGM.

Residues 6 to 122 (NKQFAVIGLG…LEKIGADRII (117 aa)) form the RCK N-terminal domain. Residues arginine 16, 36 to 38 (DIN), 56 to 57 (NA), 78 to 80 (IGA), 103 to 105 (KAQ), histidine 109, and glutamate 125 each bind NAD(+). Positions 139–222 (ENVLNYIDLS…DIKRFENEGM (84 aa)) constitute an RCK C-terminal domain.

This sequence belongs to the KtrA potassium transport family. In terms of assembly, homodimer, tetramer (dimer of homodimer) and octamer (tetramer of homodimer). Part of the KtrAB complex formed by an octameric catalytic ring of KtrA and a membrane associated dimer of KtrB forming a potassium channel.

The protein localises to the cell membrane. Catalytic subunit of the KtrAB potassium uptake transporter. The 2 major potassium transporter complexes KtrAB and KtrCD confer resistance to both suddenly imposed and prolonged osmotic stress. In Bacillus subtilis (strain 168), this protein is Ktr system potassium uptake protein A (ktrA).